The sequence spans 96 residues: Co-chaperonin GroES (96 aa).

It belongs to the GroES chaperonin family. As to quaternary structure, heptamer of 7 subunits arranged in a ring. Interacts with the chaperonin GroEL.

It is found in the cytoplasm. Together with the chaperonin GroEL, plays an essential role in assisting protein folding. The GroEL-GroES system forms a nano-cage that allows encapsulation of the non-native substrate proteins and provides a physical environment optimized to promote and accelerate protein folding. GroES binds to the apical surface of the GroEL ring, thereby capping the opening of the GroEL channel. This Actinobacillus pleuropneumoniae serotype 3 (strain JL03) protein is Co-chaperonin GroES.